We begin with the raw amino-acid sequence, 273 residues long: UPF0380 protein YubP (273 aa).

It belongs to the UPF0380 family.

This chain is UPF0380 protein YubP (yubP), found in Escherichia coli (strain K12).